The primary structure comprises 1191 residues: Solute carrier family 12 member 2 (1191 aa).

Positions 1–166 (MEPAFPASSA…MSEGSLHSSG (166 aa)) are disordered. The Cytoplasmic segment spans residues 1–258 (MEPAFPASSA…ADNKGVVKFG (258 aa)). 4 stretches are compositionally biased toward low complexity: residues 13–25 (QSQS…AGQQ), 59–69 (KGQTAAQPAAA), 80–99 (AAAP…AAAA), and 131–141 (SASSAHGGHQP). Residues 142-155 (PSESMNGYPQNGDT) are compositionally biased toward polar residues. Phosphothreonine; by OXSR1 and STK39 occurs at positions 175, 179, and 184. T189 and T202 each carry phosphothreonine. The discontinuously helical transmembrane segment at 259-288 (WIKGVLVRCMLNIWGVMLFIRLSWIVGHAG) threads the bilayer. L269 is a Na(+) binding site. Residues N270 and I271 each coordinate K(+). Residue W272 participates in Na(+) binding. G273, V274, and M275 together coordinate chloride. A helical membrane pass occupies residues 289-308 (IGLALLVIGTATVVTTITGL). At 309–339 (STSAITTNGFVRGGGAYYLISRSLGPEFGGA) the chain is on the cytoplasmic side. A helical membrane pass occupies residues 340–367 (IGLIFAFANAVAVAMYVVGFAETVRDLL). F344 is a chloride binding site. Y355 contributes to the K(+) binding site. Topologically, residues 368–377 (VEHNALMIDE) are extracellular. The chain crosses the membrane as a helical span at residues 378–401 (MSDIRIIGSVTIVVLFGISVAGME). The Cytoplasmic segment spans residues 402-404 (WEA). The helical transmembrane segment at 405–426 (KAQIVLLGILLLAIVNFTVGTF) threads the bilayer. The Extracellular portion of the chain corresponds to 427 to 458 (IPANDKRAKGFFNYRGEIFSENFVPDFRDGED). Residues 459-476 (FFSVFAIFFPAATGILAG) form a discontinuously helical membrane-spanning segment. Residues P468, A469, and T471 each coordinate K(+). 2 residues coordinate chloride: P468 and A469. Positions 472 and 473 each coordinate chloride. Over 477–491 (ANISGDLADPQLAIP) the chain is Cytoplasmic. A helical transmembrane segment spans residues 492-513 (KGTLLAILITTIVYAGAAVSVG). Over 514–571 (SCIVREATGNLTDAIIPGTVTNCTNVACKLGFNFSSCATNKCSYGLMNDFQVMSLVSG) the chain is Extracellular. N523 and N535 each carry an N-linked (GlcNAc...) asparagine glycan. A disulfide bond links C536 and C541. N-linked (GlcNAc...) asparagine glycosylation occurs at N546. The cysteines at positions 550 and 555 are disulfide-linked. Residues 572–596 (FGPLITAGIFSATLSSALASLVSAP) form a helical membrane-spanning segment. Positions 583, 586, and 587 each coordinate Na(+). The Cytoplasmic segment spans residues 597–624 (KIFQALCKDNIYPGLHVFSVGYGKNNEP). Transmembrane regions (helical) follow at residues 625-645 (LRGY…AELN) and 646-664 (VIAP…LINF). Positions 655 and 659 each coordinate chloride. At 665-687 (SVFHASLAKSPGWRPAFRFYNMW) the chain is on the cytoplasmic side. A run of 2 helical transmembrane segments spans residues 688 to 705 (ISLI…VINW) and 706 to 718 (WAAL…VLAL). Topologically, residues 719–1191 (YIYVTYKKPD…NHQSVLTFYS (473 aa)) are cytoplasmic. Residues 734-751 (STQALTYLNALQHAIRLT) are scissor helix. The segment at 929–972 (HSDADSSKPSSKSVSETNSPAVCQDQKDEEDDGKASTQPLLKKE) is disordered. The span at 935–948 (SKPSSKSVSETNSP) shows a compositional bias: low complexity. T1114 bears the Phosphothreonine mark.

The protein belongs to the SLC12A transporter family. As to quaternary structure, homodimer. In terms of processing, phosphorylated at Thr-175, Thr-179 and Thr-184 by OXSR1/OSR1 and STK39/SPAK downstream of WNK kinases (WNK1, WNK2, WNK3 or WNK4), promoting its activity. In terms of tissue distribution, strongly expressed in rectal gland, brain, gill and intestine. Also detected at lower levels in heart, kidney, and testis.

The protein resides in the basolateral cell membrane. The enzyme catalyses K(+)(out) + 2 chloride(out) + Na(+)(out) = K(+)(in) + 2 chloride(in) + Na(+)(in). Its activity is regulated as follows. Activated following phosphorylation by OXSR1/OSR1 and STK39/SPAK. Inhibited by bumetanide. Its function is as follows. Cation-chloride cotransporter which mediates the electroneutral transport of chloride, potassium and/or sodium ions across the membrane. Plays a vital role in the regulation of ionic balance and cell volume. The protein is Solute carrier family 12 member 2 (SLC12A2) of Squalus acanthias (Spiny dogfish).